Here is an 82-residue protein sequence, read N- to C-terminus: Putative membrane protein insertion efficiency factor (82 aa).

This sequence belongs to the UPF0161 family.

The protein resides in the cell inner membrane. Functionally, could be involved in insertion of integral membrane proteins into the membrane. The protein is Putative membrane protein insertion efficiency factor of Rickettsia africae (strain ESF-5).